The sequence spans 275 residues: MANFKGHALPGSFFLIIGLCWSVKYPLKYFSHTRKNSPLHYYQRLEIVEAAIRTLFSVTGILAEQFVPDGPHLHLYHENHWIKLMNWQHSTMYLFFAVSGIVDMLTYLVSHVPLGVDRLVMAVAVFMEGFLFYYHVHNRPPLDQHIHSLLLYALFGGCVSISLEVIFRDHIVLELFRTSLIILQGTWFWQIGFVLFPPFGTPEWDQKDDANLMFITMCFCWHYLAALSIVAVNYSLVYCLLTRMKRHGRGEIIGIQKLNSDDTYQTALLSGSDEE.

A run of 7 helical transmembrane segments spans residues 7 to 27 (HALP…KYPL), 47 to 67 (IVEA…EQFV), 94 to 114 (LFFA…HVPL), 116 to 136 (VDRL…YYHV), 146 to 166 (IHSL…LEVI), 180 to 200 (LIIL…PPFG), and 212 to 232 (LMFI…IVAV). A phosphoserine mark is found at Ser270 and Ser272.

It belongs to the TMEM45 family. As to quaternary structure, (Microbial infection) Interacts with sindbis virus nsP1 and nsP4; these interactions lead to viral RNA replication inhibition. In terms of assembly, (Microbial infection) Interacts with chikungunya virus nsP1 and nsP4; these interactions lead to viral RNA replication inhibition.

Its subcellular location is the endosome membrane. It is found in the lysosome membrane. The protein localises to the golgi apparatus. The protein resides in the trans-Golgi network membrane. Plays a role in innate immunity. Mechanistically, promotes alphaviruses RNA degradation by interacting with the viral polymerase nsP4 and the mRNA-capping enzyme nsP1 and thereby interfering with the interaction between viral RNA and nsP1. The sequence is that of Transmembrane protein 45B (TMEM45B) from Homo sapiens (Human).